The primary structure comprises 458 residues: Exodeoxyribonuclease 7 large subunit (458 aa).

The protein belongs to the XseA family. Heterooligomer composed of large and small subunits.

Its subcellular location is the cytoplasm. The catalysed reaction is Exonucleolytic cleavage in either 5'- to 3'- or 3'- to 5'-direction to yield nucleoside 5'-phosphates.. Its function is as follows. Bidirectionally degrades single-stranded DNA into large acid-insoluble oligonucleotides, which are then degraded further into small acid-soluble oligonucleotides. This is Exodeoxyribonuclease 7 large subunit from Escherichia coli (strain UTI89 / UPEC).